The chain runs to 519 residues: C-glycoside 3-oxidase (519 aa).

Glu41 serves as a coordination point for FAD. Residues 43 to 93 are disordered; the sequence is GPTVSNPPGAHVKNIEDPERRSHAQRASEGPGAGAETVNSPGAVKSGERRA. The span at 55-64 shows a compositional bias: basic and acidic residues; it reads KNIEDPERRS. 6 residues coordinate FAD: Ser118, Asn120, Met124, Thr129, Ala131, and Val234. The active-site Proton acceptor is His440. FAD-binding residues include Asn474 and Thr486.

Belongs to the GMC oxidoreductase family. Monomer. The cofactor is FAD.

The enzyme catalyses isovitexin + O2 = 3''-dehydroisovitexin + H2O2. The catalysed reaction is isoorientin + O2 = 3''-dehydroisoorientin + H2O2. It catalyses the reaction mangiferin + O2 = 3'-dehydromangiferin + H2O2. FAD-dependent C-glycoside-metabolizing enzyme that participates in the degradation of certain C-glycosides by catalyzing the oxidation of the hydroxyl group at the C3 position of the sugar moiety. Shows oxidase activity toward various C-glycosides such as isovitexin, isoorientin and mangiferin but cannot use carminic acid, puerarin, orientin or aloesin. Shows weak activity (100 to 1000-fold lower) with O-glycosides. Probably plays a crucial role in the metabolism of C-glycosides in nature. This is C-glycoside 3-oxidase from Arthrobacter globiformis (strain ATCC 8010 / DSM 20124 / JCM 1332 / NBRC 12137 / NCIMB 8907 / NRRL B-2979 / 168).